The sequence spans 275 residues: Expansin-B6 (275 aa).

Residues 1–25 (MAARMGSKVAAILAILSVLVVHGSC) form the signal peptide. N-linked (GlcNAc...) asparagine glycosylation is present at asparagine 33. Residues 64–170 (GGACGFKNVN…RRVPCNYPGL (107 aa)) form the Expansin-like EG45 domain. 3 cysteine pairs are disulfide-bonded: cysteine 67–cysteine 95, cysteine 98–cysteine 165, and cysteine 103–cysteine 109. The Expansin-like CBD domain maps to 183-270 (VYFAVLVEYE…NWSPNSNYRS (88 aa)).

The protein belongs to the expansin family. Expansin B subfamily. As to expression, expressed in internodes.

Its subcellular location is the secreted. It localises to the cell wall. The protein resides in the membrane. May cause loosening and extension of plant cell walls by disrupting non-covalent bonding between cellulose microfibrils and matrix glucans. No enzymatic activity has been found. May be required for rapid internodal elongation in deepwater rice during submergence. This chain is Expansin-B6 (EXPB6), found in Oryza sativa subsp. japonica (Rice).